The chain runs to 288 residues: NAD(P)H quinone oxidoreductase YCP4 (288 aa).

The Flavodoxin-like domain occupies 3-192 (IAIIQYSTYG…EIAEKQGEAF (190 aa)). FMN is bound by residues 9 to 13 (STYGH) and 110 to 164 (VFVS…SPYG). Positions 202–288 (GSKKTNTTTT…KSSCSKCIIM (87 aa)) are disordered. The span at 205–254 (KTNTTTTSKSAATSDAAGTTSGTAAGTSAATGAATGTSAPKESTKEASSS) shows a compositional bias: low complexity. The segment covering 261-288 (NGTATRTQQSTKAPETAEKSSCSKCIIM) has biased composition (polar residues).

This sequence belongs to the WrbA family. FMN serves as cofactor.

It localises to the cell membrane. It catalyses the reaction a quinone + NADH + H(+) = a quinol + NAD(+). The enzyme catalyses a quinone + NADPH + H(+) = a quinol + NADP(+). Flavodoxin-like protein (FLP) that plays a role in cell wall integrity, oxidative stress protection and virulence. FLPs act as NAD(P)H quinone oxidoreductases. Reduces ubiquinone (coenzyme Q), enabling it to serve as an antioxidant in the membrane. The sequence is that of NAD(P)H quinone oxidoreductase YCP4 from Candida albicans (strain SC5314 / ATCC MYA-2876) (Yeast).